The sequence spans 206 residues: Thymidylate kinase (206 aa).

7–14 contacts ATP; that stretch reads GGEGSGKS.

This sequence belongs to the thymidylate kinase family.

The enzyme catalyses dTMP + ATP = dTDP + ADP. Functionally, phosphorylation of dTMP to form dTDP in both de novo and salvage pathways of dTTP synthesis. This Chlamydia pneumoniae (Chlamydophila pneumoniae) protein is Thymidylate kinase (tmk).